Consider the following 553-residue polypeptide: Sulfatase (553 aa).

A signal peptide spans 1–25; it reads MTSEMKKFSKIVLFGLLISPLLASS. The Ca(2+) site is built by Asp-43, Asp-44, and Cys-88. The active-site Nucleophile is Cys-88. Cys-88 is subject to 3-oxoalanine (Cys). His-159 is a catalytic residue. 2 residues coordinate Ca(2+): Asp-350 and Asn-351.

The protein belongs to the sulfatase family. Ca(2+) serves as cofactor. Post-translationally, the conversion to 3-oxoalanine (also known as C-formylglycine, FGly), of a serine or cysteine residue in prokaryotes and of a cysteine residue in eukaryotes, is critical for catalytic activity. This post-translational modification is severely defective in multiple sulfatase deficiency (MSD).

Its subcellular location is the secreted. Functionally, sulfatase that may be involved in ulvan degradation. Ulvan is the main polysaccharide component of the Ulvales (green seaweed) cell wall. It is composed of disaccharide building blocks comprising 3-sulfated rhamnose (Rha3S) linked to D-glucuronic acid (GlcA), L-iduronic acid (IduA), or D-xylose (Xyl). The polypeptide is Sulfatase (Formosa agariphila (strain DSM 15362 / KCTC 12365 / LMG 23005 / KMM 3901 / M-2Alg 35-1)).